The following is a 341-amino-acid chain: Retinol dehydrogenase 10-A (341 aa).

The chain crosses the membrane as a helical; Signal-anchor span at residues 3–23; it reads IVLEFFLVTFRVLWAFVLAAG. Residue 40-64 coordinates NADP(+); it reads LITGAGSGLGRLFALEFARRRAQLV. S197 is a binding site for substrate. Catalysis depends on Y210, which acts as the Proton acceptor.

The protein belongs to the short-chain dehydrogenases/reductases (SDR) family.

It localises to the microsome membrane. The protein localises to the endoplasmic reticulum membrane. It catalyses the reaction all-trans-retinol + NADP(+) = all-trans-retinal + NADPH + H(+). The protein operates within cofactor metabolism; retinol metabolism. Retinol dehydrogenase with a clear preference for NADP. Converts all-trans-retinol to all-trans-retinal. Has no detectable activity towards 11-cis-retinol, 9-cis-retinol and 13-cis-retinol. This is Retinol dehydrogenase 10-A (rdh10-a) from Xenopus laevis (African clawed frog).